We begin with the raw amino-acid sequence, 616 residues long: Proline--tRNA ligase (616 aa).

This sequence belongs to the class-II aminoacyl-tRNA synthetase family. ProS type 1 subfamily. As to quaternary structure, homodimer.

It localises to the cytoplasm. The enzyme catalyses tRNA(Pro) + L-proline + ATP = L-prolyl-tRNA(Pro) + AMP + diphosphate. In terms of biological role, catalyzes the attachment of proline to tRNA(Pro) in a two-step reaction: proline is first activated by ATP to form Pro-AMP and then transferred to the acceptor end of tRNA(Pro). As ProRS can inadvertently accommodate and process non-cognate amino acids such as alanine and cysteine, to avoid such errors it has two additional distinct editing activities against alanine. One activity is designated as 'pretransfer' editing and involves the tRNA(Pro)-independent hydrolysis of activated Ala-AMP. The other activity is designated 'posttransfer' editing and involves deacylation of mischarged Ala-tRNA(Pro). The misacylated Cys-tRNA(Pro) is not edited by ProRS. This chain is Proline--tRNA ligase, found in Lactococcus lactis subsp. cremoris (strain SK11).